Consider the following 83-residue polypeptide: Short neurotoxin VAN-29 (83 aa).

A signal peptide spans 1–21; that stretch reads MKTLLLTLVVVTIVCLDLGYT. Cystine bridges form between Cys-24–Cys-45, Cys-38–Cys-62, Cys-64–Cys-75, and Cys-76–Cys-81.

The protein belongs to the three-finger toxin family. Short-chain subfamily. Type I alpha-neurotoxin sub-subfamily. Expressed by the venom gland.

Its subcellular location is the secreted. Binds to muscle nicotinic acetylcholine receptor (nAChR) and inhibit acetylcholine from binding to the receptor, thereby impairing neuromuscular transmission. In Laticauda laticaudata (Blue-ringed sea krait), this protein is Short neurotoxin VAN-29.